Reading from the N-terminus, the 340-residue chain is DNA primase large subunit PriL (340 aa).

4 residues coordinate [4Fe-4S] cluster: Cys229, Cys301, Cys310, and Cys318.

Belongs to the eukaryotic-type primase large subunit family. Heterodimer of a small subunit (PriS) and a large subunit (PriL). It depends on [4Fe-4S] cluster as a cofactor.

In terms of biological role, regulatory subunit of DNA primase, an RNA polymerase that catalyzes the synthesis of short RNA molecules used as primers for DNA polymerase during DNA replication. Stabilizes and modulates the activity of the small subunit, increasing the rate of DNA synthesis, and conferring RNA synthesis capability. The DNA polymerase activity may enable DNA primase to also catalyze primer extension after primer synthesis. May also play a role in DNA repair. This chain is DNA primase large subunit PriL, found in Thermoplasma acidophilum (strain ATCC 25905 / DSM 1728 / JCM 9062 / NBRC 15155 / AMRC-C165).